The sequence spans 240 residues: Phosphatidylserine decarboxylase proenzyme (240 aa).

Residue Ser209 is the Schiff-base intermediate with substrate; via pyruvic acid of the active site. Ser209 is subject to Pyruvic acid (Ser); by autocatalysis.

It belongs to the phosphatidylserine decarboxylase family. PSD-A subfamily. As to quaternary structure, heterodimer of a large membrane-associated beta subunit and a small pyruvoyl-containing alpha subunit. Pyruvate serves as cofactor. Is synthesized initially as an inactive proenzyme. Formation of the active enzyme involves a self-maturation process in which the active site pyruvoyl group is generated from an internal serine residue via an autocatalytic post-translational modification. Two non-identical subunits are generated from the proenzyme in this reaction, and the pyruvate is formed at the N-terminus of the alpha chain, which is derived from the carboxyl end of the proenzyme. The post-translation cleavage follows an unusual pathway, termed non-hydrolytic serinolysis, in which the side chain hydroxyl group of the serine supplies its oxygen atom to form the C-terminus of the beta chain, while the remainder of the serine residue undergoes an oxidative deamination to produce ammonia and the pyruvoyl prosthetic group on the alpha chain.

It localises to the cell membrane. The enzyme catalyses a 1,2-diacyl-sn-glycero-3-phospho-L-serine + H(+) = a 1,2-diacyl-sn-glycero-3-phosphoethanolamine + CO2. The protein operates within phospholipid metabolism; phosphatidylethanolamine biosynthesis; phosphatidylethanolamine from CDP-diacylglycerol: step 2/2. In terms of biological role, catalyzes the formation of phosphatidylethanolamine (PtdEtn) from phosphatidylserine (PtdSer). The protein is Phosphatidylserine decarboxylase proenzyme of Mycobacterium marinum (strain ATCC BAA-535 / M).